A 159-amino-acid chain; its full sequence is SsrA-binding protein (159 aa).

The protein belongs to the SmpB family.

The protein resides in the cytoplasm. Functionally, required for rescue of stalled ribosomes mediated by trans-translation. Binds to transfer-messenger RNA (tmRNA), required for stable association of tmRNA with ribosomes. tmRNA and SmpB together mimic tRNA shape, replacing the anticodon stem-loop with SmpB. tmRNA is encoded by the ssrA gene; the 2 termini fold to resemble tRNA(Ala) and it encodes a 'tag peptide', a short internal open reading frame. During trans-translation Ala-aminoacylated tmRNA acts like a tRNA, entering the A-site of stalled ribosomes, displacing the stalled mRNA. The ribosome then switches to translate the ORF on the tmRNA; the nascent peptide is terminated with the 'tag peptide' encoded by the tmRNA and targeted for degradation. The ribosome is freed to recommence translation, which seems to be the essential function of trans-translation. The protein is SsrA-binding protein of Dichelobacter nodosus (strain VCS1703A).